The sequence spans 288 residues: Protoheme IX farnesyltransferase 2 (288 aa).

A run of 8 helical transmembrane segments spans residues 16 to 36 (IGVF…GAVP), 38 to 58 (FAPV…AGAF), 88 to 108 (LWPL…AFAA), 111 to 131 (WAAL…TVWL), 139 to 159 (IVIG…VAVP), 166 to 186 (LILA…LATA), 227 to 247 (AFFG…GWFL), and 266 to 286 (FFAS…EPLL).

This sequence belongs to the UbiA prenyltransferase family. Protoheme IX farnesyltransferase subfamily.

It is found in the cell inner membrane. The catalysed reaction is heme b + (2E,6E)-farnesyl diphosphate + H2O = Fe(II)-heme o + diphosphate. It participates in porphyrin-containing compound metabolism; heme O biosynthesis; heme O from protoheme: step 1/1. In terms of biological role, converts heme B (protoheme IX) to heme O by substitution of the vinyl group on carbon 2 of heme B porphyrin ring with a hydroxyethyl farnesyl side group. The polypeptide is Protoheme IX farnesyltransferase 2 (Paramagnetospirillum magneticum (strain ATCC 700264 / AMB-1) (Magnetospirillum magneticum)).